A 120-amino-acid chain; its full sequence is MLSLNTQKTIDNLHNVFTKKNIPPIRIGDNVKVGVRIIEGNKERVQFYEGTVIAKKNSSINTTLTVRKVLQGIGVERIFLIHSPKVDSIEVLRSSKVRRSKLYYLRNLKGKASRLKQQFR.

It belongs to the bacterial ribosomal protein bL19 family.

It localises to the plastid. Its subcellular location is the chloroplast. In Trieres chinensis (Marine centric diatom), this protein is Large ribosomal subunit protein bL19c (rpl19).